We begin with the raw amino-acid sequence, 608 residues long: Probable methyltransferase PMT3 (608 aa).

Residues M1–R12 lie on the Cytoplasmic side of the membrane. Residues V13–S33 traverse the membrane as a helical; Signal-anchor for type II membrane protein segment. Topologically, residues S34–E608 are lumenal. A glycan (N-linked (GlcNAc...) asparagine) is linked at N342.

It belongs to the methyltransferase superfamily.

The protein resides in the golgi apparatus membrane. This Arabidopsis thaliana (Mouse-ear cress) protein is Probable methyltransferase PMT3.